A 422-amino-acid chain; its full sequence is Histidine--tRNA ligase (422 aa).

This sequence belongs to the class-II aminoacyl-tRNA synthetase family. As to quaternary structure, homodimer.

It is found in the cytoplasm. The catalysed reaction is tRNA(His) + L-histidine + ATP = L-histidyl-tRNA(His) + AMP + diphosphate + H(+). In Vibrio atlanticus (strain LGP32) (Vibrio splendidus (strain Mel32)), this protein is Histidine--tRNA ligase.